The primary structure comprises 482 residues: 6-phosphogluconate dehydrogenase, decarboxylating (482 aa).

NADP(+)-binding positions include 17–22 (GLAVMG), 40–42 (NRS), 82–84 (VKA), and asparagine 110. Substrate-binding positions include asparagine 110 and 136 to 138 (SGG). Lysine 193 acts as the Proton acceptor in catalysis. Residue 196–197 (HN) coordinates substrate. Residue glutamate 200 is the Proton donor of the active site. Substrate is bound by residues tyrosine 201, lysine 272, arginine 299, arginine 457, and histidine 463.

It belongs to the 6-phosphogluconate dehydrogenase family. As to quaternary structure, homodimer.

The catalysed reaction is 6-phospho-D-gluconate + NADP(+) = D-ribulose 5-phosphate + CO2 + NADPH. The protein operates within carbohydrate degradation; pentose phosphate pathway; D-ribulose 5-phosphate from D-glucose 6-phosphate (oxidative stage): step 3/3. Functionally, catalyzes the oxidative decarboxylation of 6-phosphogluconate to ribulose 5-phosphate and CO(2), with concomitant reduction of NADP to NADPH. This is 6-phosphogluconate dehydrogenase, decarboxylating (gnd) from Synechocystis sp. (strain ATCC 27184 / PCC 6803 / Kazusa).